The following is a 160-amino-acid chain: uncharacterized protein (160 aa).

The signal sequence occupies residues methionine 1–alanine 29.

This is an uncharacterized protein from Sinorhizobium fredii (strain NBRC 101917 / NGR234).